Here is a 71-residue protein sequence, read N- to C-terminus: ATP synthase subunit c (71 aa).

2 consecutive transmembrane segments (helical) span residues 9–29 (MIGYGLAAIGSAIGVGLIFAA) and 49–69 (LLGFALAEALAILGLVFAFVI).

It belongs to the ATPase C chain family. As to quaternary structure, F-type ATPases have 2 components, F(1) - the catalytic core - and F(0) - the membrane proton channel. F(1) has five subunits: alpha(3), beta(3), gamma(1), delta(1), epsilon(1). F(0) has three main subunits: a(1), b(2) and c(10-14). The alpha and beta chains form an alternating ring which encloses part of the gamma chain. F(1) is attached to F(0) by a central stalk formed by the gamma and epsilon chains, while a peripheral stalk is formed by the delta and b chains.

The protein resides in the cell membrane. F(1)F(0) ATP synthase produces ATP from ADP in the presence of a proton or sodium gradient. F-type ATPases consist of two structural domains, F(1) containing the extramembraneous catalytic core and F(0) containing the membrane proton channel, linked together by a central stalk and a peripheral stalk. During catalysis, ATP synthesis in the catalytic domain of F(1) is coupled via a rotary mechanism of the central stalk subunits to proton translocation. In terms of biological role, key component of the F(0) channel; it plays a direct role in translocation across the membrane. A homomeric c-ring of between 10-14 subunits forms the central stalk rotor element with the F(1) delta and epsilon subunits. This is ATP synthase subunit c from Micrococcus luteus (strain ATCC 4698 / DSM 20030 / JCM 1464 / CCM 169 / CCUG 5858 / IAM 1056 / NBRC 3333 / NCIMB 9278 / NCTC 2665 / VKM Ac-2230) (Micrococcus lysodeikticus).